Consider the following 596-residue polypeptide: Elongation factor 4 (596 aa).

The tr-type G domain occupies 2–184 (KHIRNFSIIA…MIVKDVPPPV (183 aa)). Residues 14 to 19 (DHGKST) and 131 to 134 (NKID) each bind GTP.

It belongs to the TRAFAC class translation factor GTPase superfamily. Classic translation factor GTPase family. LepA subfamily.

The protein localises to the cell inner membrane. It carries out the reaction GTP + H2O = GDP + phosphate + H(+). In terms of biological role, required for accurate and efficient protein synthesis under certain stress conditions. May act as a fidelity factor of the translation reaction, by catalyzing a one-codon backward translocation of tRNAs on improperly translocated ribosomes. Back-translocation proceeds from a post-translocation (POST) complex to a pre-translocation (PRE) complex, thus giving elongation factor G a second chance to translocate the tRNAs correctly. Binds to ribosomes in a GTP-dependent manner. This is Elongation factor 4 from Pseudoalteromonas translucida (strain TAC 125).